A 486-amino-acid chain; its full sequence is Beta-barrel assembly-enhancing protease (486 aa).

An N-terminal signal peptide occupies residues 1-19; it reads MIATLLSSLLLTGPISAGA. H134 is a Zn(2+) binding site. E135 is an active-site residue. Residues H138 and E199 each contribute to the Zn(2+) site. D203 functions as the Proton donor in the catalytic mechanism.

It belongs to the peptidase M48 family. BepA subfamily. Requires Zn(2+) as cofactor.

The protein localises to the periplasm. In terms of biological role, functions both as a chaperone and a metalloprotease. Maintains the integrity of the outer membrane by promoting either the assembly or the elimination of outer membrane proteins, depending on their folding state. The sequence is that of Beta-barrel assembly-enhancing protease from Yersinia pestis.